Consider the following 496-residue polypeptide: MARLSSLLYFSITVLIFLHGSTAQQFPNECQLDQLNALEPSHVLKAEAGRIEVWDHHAPQLRCSGVSFVRYIIESQGLYLPSFLNTANVSFVAKGQGLMGRVVPGCAETFQDSSVFQPGSGSPFGEGQGQGQQGQGQGQGQGQGKGQQGQGKGQQGQSQGQQGQGQGFRDMHQKVEHIRSGDTIATHPGVAQWFYNNGNQPLVIVAVMDLASHQNQLDRNPSQFYLAGKNPQGQSWLHGRGQQPQNNILNGFSPEVLAQAFKIDVRTAQQLQNQQDNRGNIVRVQGPFGVIRPPLKSQRPQETEANGLEETICSARCTDNLDDPSNADVYKPQLGYISILNSYDLPILRVLRLSALRGSIRQNAMVLPQWKSKSNAVLYVTDGEAQIQVVNDNGDRVFDGQVSQGQLLSIPQGFSVVKRATSDQFRWIEFKTNANAQINTLAGRTSVMRGLPLEVIANGYQISLEEARRVKFNTIETTLTHSSGPASYGRPRKADA.

The first 23 residues, 1-23, serve as a signal peptide directing secretion; sequence MARLSSLLYFSITVLIFLHGSTA. 2 disulfide bridges follow: Cys30–Cys63 and Cys106–Cys313. 2 consecutive Cupin type-1 domains span residues 35–269 and 319–468; these read LNAL…RTAQ and DNLD…EEAR. A Phosphothreonine modification is found at Thr109. The disordered stretch occupies residues 114–170; sequence SVFQPGSGSPFGEGQGQGQQGQGQGQGQGQGKGQQGQGKGQQGQSQGQQGQGQGFRD. A compositionally biased stretch (gly residues) spans 122-154; the sequence is SPFGEGQGQGQQGQGQGQGQGQGKGQQGQGKGQ. A Phosphotyrosine modification is found at Tyr336. A Phosphoserine modification is found at Ser338. At Thr432 the chain carries Phosphothreonine.

Belongs to the 11S seed storage protein (globulins) family. As to quaternary structure, hexamer; each subunit is composed of an acidic and a basic chain derived from a single precursor and linked by a disulfide bond.

Functionally, this is a seed storage protein. This is Cruciferin BnC2 (BnC2) from Brassica napus (Rape).